Consider the following 933-residue polypeptide: Bifunctional uridylyltransferase/uridylyl-removing enzyme (933 aa).

The interval 1-390 (MLSTRAASAD…RLAALARRKD (390 aa)) is uridylyltransferase. Residues 391 to 745 (VDGFVVDGER…TRIDRGRAIT (355 aa)) are uridylyl-removing. One can recognise an HD domain in the interval 506 to 628 (VDEHTLFALG…VQSPERLRLL (123 aa)). ACT domains are found at residues 746–829 (EVTI…DLTK) and 859–933 (VIEV…DPSA).

The protein belongs to the GlnD family. The cofactor is Mg(2+).

It carries out the reaction [protein-PII]-L-tyrosine + UTP = [protein-PII]-uridylyl-L-tyrosine + diphosphate. The catalysed reaction is [protein-PII]-uridylyl-L-tyrosine + H2O = [protein-PII]-L-tyrosine + UMP + H(+). Its activity is regulated as follows. Uridylyltransferase (UTase) activity is inhibited by glutamine, while glutamine activates uridylyl-removing (UR) activity. Uridylylation process is dependent on ATP and 2-oxoglutarate, which are effector molecules that likely bind to PII proteins and control their activity. Modifies, by uridylylation and deuridylylation, the PII regulatory proteins GlnB and GlnZ, in response to the nitrogen status of the cell that GlnD senses through the glutamine level. Under low glutamine levels, catalyzes the conversion of the PII proteins and UTP to PII-UMP and PPi, while under higher glutamine levels, GlnD hydrolyzes PII-UMP to PII and UMP (deuridylylation). Thus, controls uridylylation state and activity of the PII proteins, and plays an important role in the regulation of nitrogen fixation and metabolism. The sequence is that of Bifunctional uridylyltransferase/uridylyl-removing enzyme from Azospirillum brasilense.